Consider the following 164-residue polypeptide: Putative pre-16S rRNA nuclease (164 aa).

Belongs to the YqgF nuclease family.

The protein localises to the cytoplasm. Its function is as follows. Could be a nuclease involved in processing of the 5'-end of pre-16S rRNA. This Rhizobium rhizogenes (strain K84 / ATCC BAA-868) (Agrobacterium radiobacter) protein is Putative pre-16S rRNA nuclease.